Consider the following 305-residue polypeptide: UDP-3-O-acyl-N-acetylglucosamine deacetylase (305 aa).

Zn(2+) is bound by residues His78, His237, and Asp241. The Proton donor role is filled by His264.

The protein belongs to the LpxC family. Requires Zn(2+) as cofactor.

The enzyme catalyses a UDP-3-O-[(3R)-3-hydroxyacyl]-N-acetyl-alpha-D-glucosamine + H2O = a UDP-3-O-[(3R)-3-hydroxyacyl]-alpha-D-glucosamine + acetate. The protein operates within glycolipid biosynthesis; lipid IV(A) biosynthesis; lipid IV(A) from (3R)-3-hydroxytetradecanoyl-[acyl-carrier-protein] and UDP-N-acetyl-alpha-D-glucosamine: step 2/6. Functionally, catalyzes the hydrolysis of UDP-3-O-myristoyl-N-acetylglucosamine to form UDP-3-O-myristoylglucosamine and acetate, the committed step in lipid A biosynthesis. This Paraburkholderia xenovorans (strain LB400) protein is UDP-3-O-acyl-N-acetylglucosamine deacetylase.